The chain runs to 199 residues: Peptidyl-tRNA hydrolase (199 aa).

Residue Tyr18 participates in tRNA binding. His23 (proton acceptor) is an active-site residue. The tRNA site is built by Tyr72, Asn74, and Asn120.

This sequence belongs to the PTH family. In terms of assembly, monomer.

It is found in the cytoplasm. The enzyme catalyses an N-acyl-L-alpha-aminoacyl-tRNA + H2O = an N-acyl-L-amino acid + a tRNA + H(+). Functionally, hydrolyzes ribosome-free peptidyl-tRNAs (with 1 or more amino acids incorporated), which drop off the ribosome during protein synthesis, or as a result of ribosome stalling. In terms of biological role, catalyzes the release of premature peptidyl moieties from peptidyl-tRNA molecules trapped in stalled 50S ribosomal subunits, and thus maintains levels of free tRNAs and 50S ribosomes. This Bifidobacterium longum (strain DJO10A) protein is Peptidyl-tRNA hydrolase.